The following is a 162-amino-acid chain: Large ribosomal subunit protein uL10 (162 aa).

The protein belongs to the universal ribosomal protein uL10 family. Part of the ribosomal stalk of the 50S ribosomal subunit. The N-terminus interacts with L11 and the large rRNA to form the base of the stalk. The C-terminus forms an elongated spine to which L12 dimers bind in a sequential fashion forming a multimeric L10(L12)X complex.

Forms part of the ribosomal stalk, playing a central role in the interaction of the ribosome with GTP-bound translation factors. This Phytoplasma mali (strain AT) protein is Large ribosomal subunit protein uL10.